The chain runs to 538 residues: Putative outer membrane porin BglH (538 aa).

A signal peptide spans 1 to 25 (MFRQNLITSAILLMAPLAFSAQSLA). Residues 52-82 (KDEEKKKYTPATVNRSVSTNDQGYAANPFPT) form a disordered region. Polar residues predominate over residues 62–73 (ATVNRSVSTNDQ).

Belongs to the porin LamB (TC 1.B.3) family.

It is found in the cell outer membrane. Functionally, may be a sugar porin with a broad carbohydrate specificity. In Shigella flexneri, this protein is Putative outer membrane porin BglH (bglH).